Here is a 200-residue protein sequence, read N- to C-terminus: uncharacterized protein (200 aa).

Positions 1-19 (MNAMFHSLFALSFVSLVAS) are cleaved as a signal peptide. Residues 148–168 (FMVIVSLAAFCISVLAGLALQ) form a helical membrane-spanning segment.

It localises to the membrane. This is an uncharacterized protein from Caenorhabditis elegans.